Here is a 71-residue protein sequence, read N- to C-terminus: Ranatuerin-2P (71 aa).

The N-terminal stretch at 1–20 is a signal peptide; that stretch reads MFTMKKSLLLFFFLGTISLS. A propeptide spanning residues 21–44 is cleaved from the precursor; that stretch reads LCEQERGADEDDGVEITEEEVKRG. A disulfide bridge connects residues cysteine 66 and cysteine 71.

Expressed by the skin glands.

It is found in the secreted. Its function is as follows. Antibacterial activity against Gram-positive bacterium S.aureus and Gram-negative bacterium E.coli. Has activity against C.albicans. This is Ranatuerin-2P from Lithobates pipiens (Northern leopard frog).